A 215-amino-acid polypeptide reads, in one-letter code: Protein N-lysine methyltransferase METTL21A (215 aa).

Residues W47, 73–75 (GAG), D94, W125, and A141 contribute to the S-adenosyl-L-methionine site.

It belongs to the methyltransferase superfamily. METTL21 family.

It is found in the cytoplasm. The catalysed reaction is L-lysyl-[protein] + 3 S-adenosyl-L-methionine = N(6),N(6),N(6)-trimethyl-L-lysyl-[protein] + 3 S-adenosyl-L-homocysteine + 3 H(+). Functionally, protein-lysine methyltransferase that selectively trimethylates residues in heat shock protein 70 (HSP70) family members. In Xenopus tropicalis (Western clawed frog), this protein is Protein N-lysine methyltransferase METTL21A (mettl21a).